The primary structure comprises 388 residues: Succinate--CoA ligase [ADP-forming] subunit beta (388 aa).

One can recognise an ATP-grasp domain in the interval 9-245 (KELLAGYGLP…KSQENERELK (237 aa)). Residues K46, 53–55 (GRG), E100, Y103, and E108 each bind ATP. N200 and D214 together coordinate Mg(2+). Substrate-binding positions include N265 and 322–324 (GIV).

The protein belongs to the succinate/malate CoA ligase beta subunit family. In terms of assembly, heterotetramer of two alpha and two beta subunits. Mg(2+) is required as a cofactor.

The enzyme catalyses succinate + ATP + CoA = succinyl-CoA + ADP + phosphate. It carries out the reaction GTP + succinate + CoA = succinyl-CoA + GDP + phosphate. The protein operates within carbohydrate metabolism; tricarboxylic acid cycle; succinate from succinyl-CoA (ligase route): step 1/1. In terms of biological role, succinyl-CoA synthetase functions in the citric acid cycle (TCA), coupling the hydrolysis of succinyl-CoA to the synthesis of either ATP or GTP and thus represents the only step of substrate-level phosphorylation in the TCA. The beta subunit provides nucleotide specificity of the enzyme and binds the substrate succinate, while the binding sites for coenzyme A and phosphate are found in the alpha subunit. In Neisseria meningitidis serogroup C (strain 053442), this protein is Succinate--CoA ligase [ADP-forming] subunit beta.